Consider the following 283-residue polypeptide: Bifunctional protein FolD (283 aa).

NADP(+) is bound by residues 164 to 166 (GRS), serine 189, and isoleucine 230.

This sequence belongs to the tetrahydrofolate dehydrogenase/cyclohydrolase family. In terms of assembly, homodimer.

The catalysed reaction is (6R)-5,10-methylene-5,6,7,8-tetrahydrofolate + NADP(+) = (6R)-5,10-methenyltetrahydrofolate + NADPH. It catalyses the reaction (6R)-5,10-methenyltetrahydrofolate + H2O = (6R)-10-formyltetrahydrofolate + H(+). The protein operates within one-carbon metabolism; tetrahydrofolate interconversion. Catalyzes the oxidation of 5,10-methylenetetrahydrofolate to 5,10-methenyltetrahydrofolate and then the hydrolysis of 5,10-methenyltetrahydrofolate to 10-formyltetrahydrofolate. This is Bifunctional protein FolD from Lacticaseibacillus paracasei (strain ATCC 334 / BCRC 17002 / CCUG 31169 / CIP 107868 / KCTC 3260 / NRRL B-441) (Lactobacillus paracasei).